The primary structure comprises 371 residues: 4-hydroxy-3-methylbut-2-en-1-yl diphosphate synthase (flavodoxin) (371 aa).

Residues Cys270, Cys273, Cys305, and Glu312 each contribute to the [4Fe-4S] cluster site.

It belongs to the IspG family. [4Fe-4S] cluster is required as a cofactor.

It carries out the reaction (2E)-4-hydroxy-3-methylbut-2-enyl diphosphate + oxidized [flavodoxin] + H2O + 2 H(+) = 2-C-methyl-D-erythritol 2,4-cyclic diphosphate + reduced [flavodoxin]. Its pathway is isoprenoid biosynthesis; isopentenyl diphosphate biosynthesis via DXP pathway; isopentenyl diphosphate from 1-deoxy-D-xylulose 5-phosphate: step 5/6. Functionally, converts 2C-methyl-D-erythritol 2,4-cyclodiphosphate (ME-2,4cPP) into 1-hydroxy-2-methyl-2-(E)-butenyl 4-diphosphate. The protein is 4-hydroxy-3-methylbut-2-en-1-yl diphosphate synthase (flavodoxin) of Shewanella sediminis (strain HAW-EB3).